We begin with the raw amino-acid sequence, 200 residues long: uncharacterized protein (200 aa).

The first 24 residues, 1 to 24 (MAIDKLPLLLFLSILLCLNRPVLS), serve as a signal peptide directing secretion. N-linked (GlcNAc...) asparagine glycans are attached at residues N44, N72, N99, N124, and N135. A lipid anchor (GPI-anchor amidated serine) is attached at S174. A propeptide spans 175-200 (NGFTFGIGLVSYLVIFMYSSFCFFLF) (removed in mature form).

The protein belongs to the UPF0277 family.

The protein resides in the cell membrane. This is an uncharacterized protein from Arabidopsis thaliana (Mouse-ear cress).